The primary structure comprises 361 residues: uncharacterized protein (361 aa).

An N-terminal signal peptide occupies residues 1-28 (MSKSKFTKIIVVICIAAMFITGTSILSF).

This is an uncharacterized protein from Ruminiclostridium cellulolyticum (strain ATCC 35319 / DSM 5812 / JCM 6584 / H10) (Clostridium cellulolyticum).